We begin with the raw amino-acid sequence, 373 residues long: tRNA-specific 2-thiouridylase MnmA (373 aa).

ATP-binding positions include 12–19 (GMSGGVDS) and M38. An interaction with target base in tRNA region spans residues 98–100 (NPD). Residue C103 is the Nucleophile of the active site. Residues C103 and C200 are joined by a disulfide bond. An ATP-binding site is contributed by G127. Residues 150–152 (KDQ) form an interaction with tRNA region. The Cysteine persulfide intermediate role is filled by C200. The interaction with tRNA stretch occupies residues 312 to 313 (RY).

It belongs to the MnmA/TRMU family.

The protein localises to the cytoplasm. It carries out the reaction S-sulfanyl-L-cysteinyl-[protein] + uridine(34) in tRNA + AH2 + ATP = 2-thiouridine(34) in tRNA + L-cysteinyl-[protein] + A + AMP + diphosphate + H(+). Its function is as follows. Catalyzes the 2-thiolation of uridine at the wobble position (U34) of tRNA, leading to the formation of s(2)U34. In Streptococcus pneumoniae (strain CGSP14), this protein is tRNA-specific 2-thiouridylase MnmA.